The sequence spans 351 residues: SLAM family member 6 (351 aa).

An N-terminal signal peptide occupies residues 1–30; it reads MAVSRAPAPDSACQRMVWLFPLVFCLGSGS. Residues 31-239 are Extracellular-facing; sequence EVSQSSSDPQ…KGVLTNPPWN (209 aa). The 95-residue stretch at 36-130 folds into the Ig-like V-type domain; it reads SSDPQLMNGV…YTAQITTKDS (95 aa). N-linked (GlcNAc...) asparagine glycosylation is found at Asn82, Asn101, Asn112, Asn152, Asn159, Asn172, Asn186, Asn193, and Asn218. The Ig-like C2-type domain maps to 147–210; the sequence is NLETTNYTLL…RNSGDQTYVC (64 aa). Intrachain disulfides connect Cys162/Cys229 and Cys168/Cys210. Residues 240-262 form a helical membrane-spanning segment; the sequence is AVWFMTTISIISAVILIFVCWSI. Topologically, residues 263 to 351 are cytoplasmic; that stretch reads HVWKRRGSLP…KVNTLINYNS (89 aa). The tract at residues 272 to 295 is disordered; the sequence is PLTSQHPESSQSTDGPGSPGNTVY. Short sequence motifs (ITSM) lie at residues 293–298 and 317–322; these read TVYAQV and TIYSIV. The residue at position 319 (Tyr319) is a Phosphotyrosine.

As to quaternary structure, homodimer. Interacts with PTN6 and, upon phosphorylation, with PTN11 and SH2D1A/SAP. Phosphorylated. As to expression, expressed on hematopoietic cells. Isoform 3 is expressed in thymocytes and B lymphocytes of C57Bl/6 strain.

It localises to the cell membrane. Self-ligand receptor of the signaling lymphocytic activation molecule (SLAM) family. SLAM receptors triggered by homo- or heterotypic cell-cell interactions are modulating the activation and differentiation of a wide variety of immune cells and thus are involved in the regulation and interconnection of both innate and adaptive immune response. Activities are controlled by presence or absence of small cytoplasmic adapter proteins, SH2D1A/SAP and/or SH2D1B/EAT-2. Triggers cytolytic activity only in natural killer cells (NK) expressing high surface densities of natural cytotoxicity receptors. Positive signaling in NK cells implicates phosphorylation of VAV1. NK cell activation seems to depend on SH2D1B and not on SH2D1A. In conjunction with SLAMF1 controls the transition between positive selection and the subsequent expansion and differentiation of the thymocytic natural killer T (NKT) cell lineage. Promotes T cell differentiation into a helper T-cell Th17 phenotype leading to increased IL-17 secretion; the costimulatory activity requires SH2D1A. Promotes recruitment of RORC to the IL-17 promoter. In conjunction with SLAMF1 and CD84/SLAMF5 may be a negative regulator of the humoral immune response. In the absence of SH2D1A/SAP can transmit negative signals to CD4(+) T-cells and NKT cells. Negatively regulates germinal center formation by inhibiting T-cell:B-cell adhesion; the function probably implicates increased association with PTPN6/SHP-1 via ITSMs in absence of SH2D1A/SAP. However, reported to mediated T-cell adhesion, to participate in stable T-cell:B-cell interactions and to be involved in maintaining B-cell tolerance in germinal centers and in preventing autoimmunity. Involved in regulation of autoimmunity. Isoform 3 may be suppressor of pathogenic T-cell proliferation. The protein is SLAM family member 6 (Slamf6) of Mus musculus (Mouse).